A 252-amino-acid polypeptide reads, in one-letter code: GPI alpha-1,4-mannosyltransferase I, stabilizing subunit (252 aa).

Residues 1–22 (MAASALAWLLLWAAGLVGRLAA) form the signal peptide. N-linked (GlcNAc...) asparagine glycosylation is found at Asn97 and Asn209. The chain crosses the membrane as a helical span at residues 225–245 (VCSVTLLITVLCSTLILLAVF).

The protein belongs to the PIGX family. As to quaternary structure, part of the glycosylphosphatidylinositol-mannosyltransferase I complex that is composed of PIGM and PIGX. Interacts with PIGM; PIGX stabilizes PIGM.

It localises to the endoplasmic reticulum membrane. It functions in the pathway glycolipid biosynthesis; glycosylphosphatidylinositol-anchor biosynthesis. In terms of biological role, stabilizing subunit of the glycosylphosphatidylinositol-mannosyltransferase I complex which catalyzes the transfer of the first mannose, via an alpha-1,4 bond from a dolichol-phosphate-mannose (Dol-P-Man) to the glucosaminyl acyl phosphatidylinositol (GlcN-(acyl)PI) intermediate to generate alpha-D-Man-(1-&gt;4)-alpha-D-GlcN-(1-&gt;6)-(1-radyl,2-acyl-sn-glycero-3-phospho)-2-acyl-inositol and participates in the sixth step of the glycosylphosphatidylinositol-anchor biosynthesis. Probably acts by stabilizing the mannosyltransferase PIGM. In Rattus norvegicus (Rat), this protein is GPI alpha-1,4-mannosyltransferase I, stabilizing subunit.